The chain runs to 1178 residues: Double-stranded RNA-specific adenosine deaminase (1178 aa).

The tract at residues Met1–Tyr40 is disordered. 2 positions are modified to asymmetric dimethylarginine: Arg30 and Arg42. The 67-residue stretch at Leu135 to Pro201 folds into the Z-binding 1 domain. Residues Leu135–Gln204 form an interaction with Z-DNA region. The interval Glu221 to Ser244 is disordered. The span at Leu229–Ser238 shows a compositional bias: acidic residues. 2 positions are modified to phosphoserine: Ser231 and Ser238. Residues Pro246–Asp310 form the Z-binding 2 domain. The segment at Leu316 to Met383 is disordered. Residues His323–Thr337 are compositionally biased toward low complexity. Positions Lys360–Arg379 are enriched in basic and acidic residues. Lys371 is covalently cross-linked (Glycyl lysine isopeptide (Lys-Gly) (interchain with G-Cter in SUMO); alternate). Residue Lys371 forms a Glycyl lysine isopeptide (Lys-Gly) (interchain with G-Cter in SUMO1); alternate linkage. Lys371 participates in a covalent cross-link: Glycyl lysine isopeptide (Lys-Gly) (interchain with G-Cter in SUMO2); alternate. The residue at position 434 (Ser434) is a Phosphoserine. Residues Asn456 to Arg524 form the DRBM 1 domain. Positions Lys527 to Ala550 are enriched in basic and acidic residues. A disordered region spans residues Lys527–Ser564. A compositionally biased stretch (polar residues) spans Ala554 to Ser564. Phosphoserine is present on residues Ser567, Ser582, and Ser589. Positions Ser567–Glu635 constitute a DRBM 2 domain. The tract at residues Lys631–Met657 is disordered. The segment covering Glu635–Ala648 has biased composition (low complexity). The interval Ile665–Thr674 is N-terminal extension of DRBM 3 and constituent of a bi-partite nuclear localization signal. The DRBM 3 domain maps to Asn675 to Gly743. Residues Glu744–Gln750 form a C-terminal extension of DRBM 3 and constituent of a bi-partite nuclear localization signal region. The residue at position 757 (Thr757) is a Phosphothreonine. 3 positions are modified to phosphoserine: Ser763, Ser772, and Ser774. A Glycyl lysine isopeptide (Lys-Gly) (interchain with G-Cter in SUMO2) cross-link involves residue Lys824. An A to I editase domain is found at Ser835–Phe1170. His859 serves as a coordination point for Zn(2+). The Proton donor role is filled by Glu861. Residues Cys915 and Cys985 each contribute to the Zn(2+) site.

As to quaternary structure, homodimer. Homodimerization is essential for its catalytic activity. Isoform 5 can form heterodimers with ADARB1/ADAR2. Isoform 1 and isoform 5 (via DRBM 3 domain) interact with TNPO1. Isoform 5 (via DRBM domains) interacts with XPO5. Isoform 1 and isoform 5 can interact with UPF1. Isoform 1 interacts with ILF2/NF45 and ILF3/NF90. Binding to ILF3/NF90 up-regulates ILF3-mediated gene expression. Isoform 1 and isoform 5 interact with EIF2AK2/PKR. In terms of processing, sumoylation reduces RNA-editing activity. Highest levels in brain and spleen. Lowest levels in liver.

The protein resides in the cytoplasm. It localises to the nucleus. Its subcellular location is the nucleolus. It carries out the reaction adenosine in double-stranded RNA + H2O + H(+) = inosine in double-stranded RNA + NH4(+). Functionally, catalyzes the hydrolytic deamination of adenosine to inosine in double-stranded RNA (dsRNA) referred to as A-to-I RNA editing. This may affect gene expression and function in a number of ways that include mRNA translation by changing codons and hence the amino acid sequence of proteins since the translational machinery read the inosine as a guanosine; pre-mRNA splicing by altering splice site recognition sequences; RNA stability by changing sequences involved in nuclease recognition; genetic stability in the case of RNA virus genomes by changing sequences during viral RNA replication; and RNA structure-dependent activities such as microRNA production or targeting or protein-RNA interactions. Can edit both viral and cellular RNAs and can edit RNAs at multiple sites (hyper-editing) or at specific sites (site-specific editing). Its cellular RNA substrates include: bladder cancer-associated protein (BLCAP), neurotransmitter receptors for glutamate (GRIA2) and serotonin (HTR2C) and GABA receptor (GABRA3). Site-specific RNA editing of transcripts encoding these proteins results in amino acid substitutions which consequently alters their functional activities. Exhibits low-level editing at the GRIA2 Q/R site, but edits efficiently at the R/G site and HOTSPOT1. Does not affect polyomavirus replication but provides protection against virus-induced cytopathic effects. Essential for embryonic development and cell survival and plays a critical role in the maintenance of hematopoietic stem cells. This chain is Double-stranded RNA-specific adenosine deaminase (Adar), found in Mus musculus (Mouse).